Consider the following 735-residue polypeptide: Zinc finger CCCH domain-containing protein 14 (735 aa).

Met-1 carries the post-translational modification N-acetylmethionine. Residues 78-153 are disordered; it reads TEPSSLKSPD…RHSYDDGAST (76 aa). Ser-85 carries the post-translational modification Phosphoserine. Residues Lys-99, Lys-139, Lys-175, and Lys-198 each participate in a glycyl lysine isopeptide (Lys-Gly) (interchain with G-Cter in SUMO2) cross-link. The segment covering 131 to 144 has biased composition (polar residues); it reads VSTSSQEQKSTNVR. A Phosphoserine modification is found at Ser-240. Glycyl lysine isopeptide (Lys-Gly) (interchain with G-Cter in SUMO2) cross-links involve residues Lys-245, Lys-283, and Lys-295. The disordered stretch occupies residues 308–351; the sequence is FSHDGEEEEEDEDYGTRIGSLSSSVSVPAKPERRPSLPPSKQAN. 3 positions are modified to phosphoserine: Ser-309, Ser-327, and Ser-343. Lys-357 carries the post-translational modification N6-acetyllysine; alternate. Lys-357 is covalently cross-linked (Glycyl lysine isopeptide (Lys-Gly) (interchain with G-Cter in SUMO2); alternate). Lys-378 is covalently cross-linked (Glycyl lysine isopeptide (Lys-Gly) (interchain with G-Cter in SUMO2)). Ser-390 and Ser-409 each carry phosphoserine. The disordered stretch occupies residues 399–431; sequence VQGQNRAPRISPPVKEEEAKGDNTGKSQGTQQR. Over residues 412 to 421 the composition is skewed to basic and acidic residues; sequence VKEEEAKGDN. Lys-413 participates in a covalent cross-link: Glycyl lysine isopeptide (Lys-Gly) (interchain with G-Cter in SUMO2). Polar residues predominate over residues 422–431; sequence TGKSQGTQQR. Lys-489 participates in a covalent cross-link: Glycyl lysine isopeptide (Lys-Gly) (interchain with G-Cter in SUMO2). Residues Ser-498, Ser-515, Ser-527, and Ser-620 each carry the phosphoserine modification. 5 C3H1-type zinc fingers span residues 595 to 620, 621 to 640, 641 to 656, 681 to 698, and 700 to 718; these read EKLL…HPIS, PCKA…VHPN, CKYD…PFTH, CRYF…YHPK, and CRFN…HPTI.

The protein belongs to the ZC3H14 family. In terms of assembly, homodimer; facilitating circular RNAs (circRNAs) formation. Associates with the spliceosome. Interacts with HOOK2. Interacts with ZFC3H1 in a RNase-sensitive manner. Expressed in hippocampal pyramidal neurons (at protein level). Expressed in kidney, liver, muscle, heart brain and testes. Expressed in hippocampal pyramidal neurons.

It is found in the nucleus speckle. RNA-binding protein involved in the biogenesis of circular RNAs (circRNAs), which are produced by back-splicing circularization of pre-mRNAs. Acts by binding to both exon-intron boundary and 3'-UTR of pre-mRNAs to promote circRNA biogenesis through dimerization and the association with the spliceosome. Required for spermatogenesis via involvement in circRNA biogenesis. Regulates the pre-mRNA processing of ATP5MC1; preventing its degradation. Also binds the poly(A) tail of mRNAs; controlling poly(A) length in neuronal cells. The sequence is that of Zinc finger CCCH domain-containing protein 14 from Mus musculus (Mouse).